The following is a 333-amino-acid chain: Cytochrome f (333 aa).

The signal sequence occupies residues Met1 to Ala44. Tyr45, Cys66, Cys69, and His70 together coordinate heme. Residues Val299–Leu318 traverse the membrane as a helical segment.

Belongs to the cytochrome f family. As to quaternary structure, the 4 large subunits of the cytochrome b6-f complex are cytochrome b6, subunit IV (17 kDa polypeptide, PetD), cytochrome f and the Rieske protein, while the 4 small subunits are PetG, PetL, PetM and PetN. The complex functions as a dimer. It depends on heme as a cofactor.

Its subcellular location is the cellular thylakoid membrane. Component of the cytochrome b6-f complex, which mediates electron transfer between photosystem II (PSII) and photosystem I (PSI), cyclic electron flow around PSI, and state transitions. The protein is Cytochrome f of Nostoc sp. (strain PCC 7120 / SAG 25.82 / UTEX 2576).